A 165-amino-acid polypeptide reads, in one-letter code: Transcription antitermination protein NusB (165 aa).

The protein belongs to the NusB family.

Its function is as follows. Involved in transcription antitermination. Required for transcription of ribosomal RNA (rRNA) genes. Binds specifically to the boxA antiterminator sequence of the ribosomal RNA (rrn) operons. The sequence is that of Transcription antitermination protein NusB from Bradyrhizobium diazoefficiens (strain JCM 10833 / BCRC 13528 / IAM 13628 / NBRC 14792 / USDA 110).